We begin with the raw amino-acid sequence, 158 residues long: Probable deoxyuridine 5'-triphosphate nucleotidohydrolase (158 aa).

This sequence belongs to the dUTPase family. Requires Mg(2+) as cofactor.

It catalyses the reaction dUTP + H2O = dUMP + diphosphate + H(+). The protein operates within pyrimidine metabolism; dUMP biosynthesis; dUMP from dCTP (dUTP route): step 1/2. Functionally, this enzyme is involved in nucleotide metabolism: it produces dUMP, the immediate precursor of thymidine nucleotides and it decreases the intracellular concentration of dUTP so that uracil cannot be incorporated into DNA. It does probably not deaminate dCTP. The protein is Probable deoxyuridine 5'-triphosphate nucleotidohydrolase of Sulfolobus islandicus rod-shaped virus 1 (SIRV-1).